Here is a 521-residue protein sequence, read N- to C-terminus: Probable protein kinase UbiB (521 aa).

The region spanning 119–497 (SFDRQPVASA…QKRTNRLLQS (379 aa)) is the Protein kinase domain. Residues 125 to 133 (VASASIAQV) and lysine 151 contribute to the ATP site. The active-site Proton acceptor is aspartate 286. A helical transmembrane segment spans residues 496-516 (QSLIYGGLGFVLGLLVMQLFV).

This sequence belongs to the ABC1 family. UbiB subfamily.

Its subcellular location is the cell inner membrane. Its pathway is cofactor biosynthesis; ubiquinone biosynthesis [regulation]. Its function is as follows. Is probably a protein kinase regulator of UbiI activity which is involved in aerobic coenzyme Q (ubiquinone) biosynthesis. This is Probable protein kinase UbiB from Acidovorax sp. (strain JS42).